A 223-amino-acid polypeptide reads, in one-letter code: Ribosomal RNA small subunit methyltransferase G (223 aa).

Residues Gly-84, Leu-89, 135–136 (VE), and Arg-150 contribute to the S-adenosyl-L-methionine site.

Belongs to the methyltransferase superfamily. RNA methyltransferase RsmG family.

It localises to the cytoplasm. The catalysed reaction is guanosine(527) in 16S rRNA + S-adenosyl-L-methionine = N(7)-methylguanosine(527) in 16S rRNA + S-adenosyl-L-homocysteine. Its function is as follows. Specifically methylates the N7 position of guanine in position 527 of 16S rRNA. The protein is Ribosomal RNA small subunit methyltransferase G of Saccharophagus degradans (strain 2-40 / ATCC 43961 / DSM 17024).